The chain runs to 826 residues: Arsenite oxidase subunit AioA (826 aa).

Positions 22, 25, and 29 each coordinate [3Fe-4S] cluster. Substrate is bound by residues His-196, Glu-204, Arg-420, and His-424.

The protein belongs to the prokaryotic molybdopterin-containing oxidoreductase family. As to quaternary structure, heterodimer consisting of a large and a small subunit. [3Fe-4S] cluster serves as cofactor. The cofactor is Mo-bis(molybdopterin guanine dinucleotide).

The catalysed reaction is 2 oxidized [azurin] + arsenite + H2O = 2 reduced [azurin] + arsenate + 3 H(+). Its function is as follows. Involved in the detoxification of arsenic. Oxidizes As(III)O3(3-) (arsenite) to the somewhat less toxic As(V)O4(3-) (arsenate). The polypeptide is Arsenite oxidase subunit AioA (aioA) (Alcaligenes faecalis).